Reading from the N-terminus, the 706-residue chain is Maternal embryonic leucine zipper kinase (706 aa).

The Protein kinase domain occupies Y11–L265. ATP is bound by residues L17–V25 and K40. D132 acts as the Proton acceptor in catalysis. Disordered regions lie at residues L366 to D386, F433 to P493, and S506 to A555. Polar residues-rich tracts occupy residues S447–T461 and S506–P515. The region spanning Q656–I705 is the KA1 domain.

This sequence belongs to the protein kinase superfamily. CAMK Ser/Thr protein kinase family. SNF1 subfamily. May be phosphorylated at Thr-169 by par-4 and/or autophosphorylated which likely results in its activation. Phosphorylation is not required for co-localization with the centrosome.

The protein resides in the cytoplasm. The protein localises to the cytoskeleton. Its subcellular location is the microtubule organizing center. It is found in the centrosome. It catalyses the reaction L-seryl-[protein] + ATP = O-phospho-L-seryl-[protein] + ADP + H(+). The enzyme catalyses L-threonyl-[protein] + ATP = O-phospho-L-threonyl-[protein] + ADP + H(+). Serine/threonine-protein kinase involved in cell autonomous neuroblast asymmetric divisions that generate one precursor cell and one apoptotic cell by controlling spindle positioning, myosin distribution and the segregation of cell fate determinants. Plays a role in neural fate specification in several dopaminergic linages, acting in concert with ham-1. Involved in phosphorylation of multiple proteins associated with key developmental processes, including the cell cycle, apoptosis, endocytosis, and asymmetric cell division. Promotes cell shedding during embryogenesis, probably through the endocytosis-mediated removal of cell adhesion molecules such as hmp-1 from the cell surface. May act downstream of par-4/strd-1/mop-25 to regulate cell shedding. The protein is Maternal embryonic leucine zipper kinase of Caenorhabditis elegans.